The chain runs to 684 residues: Pheromone-processing carboxypeptidase KEX1 (684 aa).

Residues 1–16 (MRFWYFSAILWVVCQA) form the signal peptide. The Lumenal portion of the chain corresponds to 17-588 (LPSKKQYSVA…QRKRRKGTFK (572 aa)). Active-site residues include Ser-181 and Asp-390. N-linked (GlcNAc...) asparagine glycans are attached at residues Asn-443 and Asn-451. Residue His-454 is part of the active site. The disordered stretch occupies residues 498-582 (DNSKLGVLGI…KEEQDRQRKR (85 aa)). Residues 514 to 547 (EEEELEEEFDQYVDELEEGESESGLLDDDKEDET) show a composition bias toward acidic residues. Residues 554–578 (NDDKNKGGEDKPNENPDKEKEEQDR) are compositionally biased toward basic and acidic residues. The helical transmembrane segment at 589–609 (IFGITILVVLTLGSFVFYIYI) threads the bilayer. Residues 610-684 (RKHTNKTRAI…LDESFELENL (75 aa)) are Cytoplasmic-facing. The disordered stretch occupies residues 641-684 (LEHGYDFETDQSQPRSGQSAPKKNGSYTRVPNTELDESFELENL). Positions 650-671 (DQSQPRSGQSAPKKNGSYTRVP) are enriched in polar residues. The span at 674–684 (ELDESFELENL) shows a compositional bias: acidic residues.

The protein belongs to the peptidase S10 family.

It is found in the golgi apparatus. The protein localises to the trans-Golgi network membrane. It catalyses the reaction Preferential release of a C-terminal arginine or lysine residue.. Its function is as follows. Protease with a carboxypeptidase B-like function involved in the C-terminal processing of the lysine and arginine residues from protein precursors. Promotes cell fusion and is involved in the programmed cell death. The sequence is that of Pheromone-processing carboxypeptidase KEX1 (KEX1) from Zygosaccharomyces rouxii (strain ATCC 2623 / CBS 732 / NBRC 1130 / NCYC 568 / NRRL Y-229).